The sequence spans 510 residues: MFCGLNDVNVCTISLQMAMWRPNESKVYLPPTPVSKVLSTDVYVTRTNVYYHGGSSRLLTVGHPYYSIKKSGNNKVSVPKVSGYQYRVFHVKLPDPNKFGLPDANLYDPDTQRLLWACVGVEVGRGQPLGVGISGHPYYNKQDDTENSHNPDAADDGREYISMDYKQTQLFILGCKPPIGEHWSKGTTCSGSSAVGDCPPLQFTNTTIEDGDMVETGFGALDFAALQSNKSDVPLDICTNICKYPDYLKMAADPYGDSMFFSLRREQMFTRHFFNRGGSMGDALPDELYVKSSTVQTPGSYVYTSTPSGSMVSSEQQLFNKPYWLRRAQGHNNGMCWGNRIFLTVVDTTRSTNVSLCATVTTETNYKASNYKEYLRHMEEYDLQFIFQLCKITLTPEIMAYIHNMDARLLEDWNFGVPPPPSASLQDTYRYLQSQAITCQKPTPPKTPTDPYATMTFWDVDLSESFSMDLDQFPLGRKFLLQRGATPTVSRKRAAATAAAPTAKRKKVRR.

A disordered region spans residues 490–510 (SRKRAAATAAAPTAKRKKVRR).

The protein belongs to the papillomaviridae L1 protein family. Self-assembles into homopentamers. The capsid has an icosahedral symmetry and consists of 72 capsomers, with each capsomer being a pentamer of L1. Interacts with the minor capsid protein L2; this interaction is necessary for viral genome encapsidation. Interacts with protein E2; this interaction enhances E2-dependent replication and transcription activation.

It is found in the virion. The protein localises to the host nucleus. Its function is as follows. Forms an icosahedral capsid with a T=7 symmetry and a 50 nm diameter. The capsid is composed of 72 pentamers linked to each other by disulfide bonds and associated with L2 proteins. Binds to heparan sulfate proteoglycans on cell surface of basal layer keratinocytes to provide initial virion attachment. This binding mediates a conformational change in the virus capsid that facilitates efficient infection. The virion enters the host cell via endocytosis. During virus trafficking, L1 protein dissociates from the viral DNA and the genomic DNA is released to the host nucleus. The virion assembly takes place within the cell nucleus. Encapsulates the genomic DNA together with protein L2. This Human papillomavirus 57 protein is Major capsid protein L1.